The primary structure comprises 252 residues: MLAKRIIPCLDTIGRNVVKGTSFVNIRIVGDAKELARRYEREGADEIVLLDITASEEGRGTFVDVVTEVASELFVPLTVGGGIKNIEDVRKLLKAGADKVSINTAAVENPDIINQIASEFGSQCLVVAIDVKKRGKKSWEVYVKGGKVPTGIDFKDWIVEVEKRGAGEILLTSIDADGHLSGYDYELLECALNYSNLPLIASGGAGSLEDLYKALKIGVDAVLAASIFHFGTYTIPEVKKYLKEKGIWVRLD.

Residues Asp-11 and Asp-130 contribute to the active site.

It belongs to the HisA/HisF family. Heterodimer of HisH and HisF.

The protein localises to the cytoplasm. The catalysed reaction is 5-[(5-phospho-1-deoxy-D-ribulos-1-ylimino)methylamino]-1-(5-phospho-beta-D-ribosyl)imidazole-4-carboxamide + L-glutamine = D-erythro-1-(imidazol-4-yl)glycerol 3-phosphate + 5-amino-1-(5-phospho-beta-D-ribosyl)imidazole-4-carboxamide + L-glutamate + H(+). It functions in the pathway amino-acid biosynthesis; L-histidine biosynthesis; L-histidine from 5-phospho-alpha-D-ribose 1-diphosphate: step 5/9. Functionally, IGPS catalyzes the conversion of PRFAR and glutamine to IGP, AICAR and glutamate. The HisF subunit catalyzes the cyclization activity that produces IGP and AICAR from PRFAR using the ammonia provided by the HisH subunit. This is Imidazole glycerol phosphate synthase subunit HisF from Dictyoglomus thermophilum (strain ATCC 35947 / DSM 3960 / H-6-12).